The following is a 179-amino-acid chain: Hypoxanthine phosphoribosyltransferase (179 aa).

Diphosphate is bound by residues arginine 45 and glycine 46. Residue glutamate 101 participates in GMP binding. An IMP-binding site is contributed by glutamate 101. Mg(2+) contacts are provided by glutamate 101 and aspartate 102. The active-site Proton acceptor is the aspartate 105. Residues 105 to 110 (DTGYTL), lysine 133, and aspartate 161 contribute to the GMP site. Residues 105-110 (DTGYTL) and lysine 133 contribute to the IMP site. Diphosphate is bound at residue arginine 167.

It belongs to the purine/pyrimidine phosphoribosyltransferase family. Homotetramer. The cofactor is Mg(2+).

Its subcellular location is the cytoplasm. It carries out the reaction IMP + diphosphate = hypoxanthine + 5-phospho-alpha-D-ribose 1-diphosphate. It catalyses the reaction GMP + diphosphate = guanine + 5-phospho-alpha-D-ribose 1-diphosphate. Its pathway is purine metabolism; IMP biosynthesis via salvage pathway; IMP from hypoxanthine: step 1/1. Purine salvage pathway enzyme which catalyzes the transfer of the ribosyl-5-phosphate group from 5-phospho-alpha-D-ribose 1-diphosphate (PRPP) to the N9 position of hypoxanthine to yield IMP (inosine 5'-monophosphate). To a lesser extent, can also act on guanine leading to GMP, but shows a highly less efficient activity with xanthine. This is Hypoxanthine phosphoribosyltransferase (hpt) from Haemophilus influenzae (strain ATCC 51907 / DSM 11121 / KW20 / Rd).